The following is a 416-amino-acid chain: UDP-N-acetylglucosamine 1-carboxyvinyltransferase (416 aa).

Position 22 to 23 (22 to 23) interacts with phosphoenolpyruvate; that stretch reads KN. Arg92 lines the UDP-N-acetyl-alpha-D-glucosamine pocket. The active-site Proton donor is the Cys116. Cys116 is modified (2-(S-cysteinyl)pyruvic acid O-phosphothioketal). Residues Asp304 and Ile326 each contribute to the UDP-N-acetyl-alpha-D-glucosamine site.

It belongs to the EPSP synthase family. MurA subfamily.

Its subcellular location is the cytoplasm. It catalyses the reaction phosphoenolpyruvate + UDP-N-acetyl-alpha-D-glucosamine = UDP-N-acetyl-3-O-(1-carboxyvinyl)-alpha-D-glucosamine + phosphate. It participates in cell wall biogenesis; peptidoglycan biosynthesis. Its function is as follows. Cell wall formation. Adds enolpyruvyl to UDP-N-acetylglucosamine. This Solidesulfovibrio magneticus (strain ATCC 700980 / DSM 13731 / RS-1) (Desulfovibrio magneticus) protein is UDP-N-acetylglucosamine 1-carboxyvinyltransferase.